Consider the following 154-residue polypeptide: MRCPYCRHPDSRVVDSREADDGQLIRRRRSCPECGKRFTTVEEAVLAVVKRSGVTEPFSRTKIIGGVRKACQGRPVDDDSIALLAQKVEETVRAKGAAELPSHEVGLAILGPLRDLDEVAYLRFASVYRSFESLADFEREIETLRTAAQTRGGG.

The segment at 3–34 (CPYCRHPDSRVVDSREADDGQLIRRRRSCPEC) is a zinc-finger region. The 91-residue stretch at 46-136 (LAVVKRSGVT…VYRSFESLAD (91 aa)) folds into the ATP-cone domain.

Belongs to the NrdR family. It depends on Zn(2+) as a cofactor.

In terms of biological role, negatively regulates transcription of bacterial ribonucleotide reductase nrd genes and operons by binding to NrdR-boxes. The chain is Transcriptional repressor NrdR from Salinispora arenicola (strain CNS-205).